The chain runs to 171 residues: Probable deoxyuridine 5'-triphosphate nucleotidohydrolase (171 aa).

This sequence belongs to the dCTP deaminase family. Archaeal dUTPase subfamily.

It carries out the reaction dUTP + H2O = dUMP + diphosphate + H(+). The protein operates within pyrimidine metabolism; dUMP biosynthesis; dUMP from dCTP (dUTP route): step 2/2. In terms of biological role, this enzyme is involved in nucleotide metabolism: it produces dUMP, the immediate precursor of thymidine nucleotides and it decreases the intracellular concentration of dUTP so that uracil cannot be incorporated into DNA. The sequence is that of Probable deoxyuridine 5'-triphosphate nucleotidohydrolase from Methanosarcina mazei (strain ATCC BAA-159 / DSM 3647 / Goe1 / Go1 / JCM 11833 / OCM 88) (Methanosarcina frisia).